The primary structure comprises 957 residues: Receptor-like protein 34 (957 aa).

The N-terminal stretch at 1–31 (MKGSWVVSTSIIRITLSFTFLFICHFSDVLA) is a signal peptide. Residues 32–910 (APTRHLCRPE…EEEDEDLISW (879 aa)) lie on the Extracellular side of the membrane. N-linked (GlcNAc...) asparagine glycosylation is found at N78, N101, N114, N143, N167, N191, and N215. LRR repeat units lie at residues 120–143 (LHFL…SIEN), 144–167 (LSHL…SIGN), 168–192 (LSRL…IGNL), 194–216 (HLTF…IGNL), 217–240 (SHLT…IGGL), 241–264 (SNLT…IGNL), 266–287 (QLIV…SFGN), 288–312 (LNQL…LLNL), 313–336 (TGLS…ITSL), 338–360 (NLMA…LFII), 361–384 (PSLT…NISS), 386–409 (SNLQ…ISKL), 412–434 (LQEL…IFSH), 435–459 (LKSL…ILPY), 460–483 (FKTL…SVSS), 487–510 (SQSI…LRTQ), 511–534 (HELG…LWTL), and 535–557 (PNLF…TKPE). N-linked (GlcNAc...) asparagine glycosylation is found at N242 and N263. N311 and N332 each carry an N-linked (GlcNAc...) asparagine glycan. An N-linked (GlcNAc...) asparagine glycan is attached at N381. A glycan (N-linked (GlcNAc...) asparagine) is linked at N477. 6 N-linked (GlcNAc...) asparagine glycosylation sites follow: N541, N544, N569, N593, N608, and N618. An LRR 19; degenerate repeat occupies 558-580 (PSMAYLLGSNNNFTGKIPSFICE). LRR repeat units lie at residues 581-605 (LRSL…MENL), 606-630 (KSNL…IFES), 632-652 (RSLD…LRFF), 653-675 (SNLE…WLSS), 677-698 (QKLQ…QALF), 699-722 (PKLR…YFVE), 765-789 (LTIY…IGLL), 790-813 (KELH…IGNL), 815-837 (ALES…IGNL), and 839-862 (LLSY…QFLT). N712 carries N-linked (GlcNAc...) asparagine glycosylation. 4 N-linked (GlcNAc...) asparagine glycosylation sites follow: N796, N812, N836, and N844. Residues 911-931 (IAAAIGFGPGIAFGLMFGYIL) form a helical membrane-spanning segment. Residues 932-957 (VSYKPEWFMNPFGRNNRRRKRHTTTH) are Cytoplasmic-facing.

This sequence belongs to the RLP family.

The protein resides in the cell membrane. The polypeptide is Receptor-like protein 34 (Arabidopsis thaliana (Mouse-ear cress)).